Consider the following 157-residue polypeptide: Epithelial membrane protein 1 (157 aa).

The chain crosses the membrane as a helical span at residues 1–21 (MLVLLAGIFVVHIATVIMLFV). N-linked (GlcNAc...) asparagine glycans are attached at residues Asn-43 and Asn-46. 3 helical membrane-spanning segments follow: residues 67-87 (FMIL…FQLF), 95-115 (FFLS…GVSI), and 134-154 (YILG…YLVL).

It belongs to the PMP-22/EMP/MP20 family.

It localises to the membrane. This is Epithelial membrane protein 1 (EMP1) from Homo sapiens (Human).